Reading from the N-terminus, the 247-residue chain is 5'-nucleotidase SurE (247 aa).

A divalent metal cation contacts are provided by aspartate 8, aspartate 9, serine 39, and asparagine 91.

Belongs to the SurE nucleotidase family. Requires a divalent metal cation as cofactor.

It localises to the cytoplasm. The catalysed reaction is a ribonucleoside 5'-phosphate + H2O = a ribonucleoside + phosphate. Functionally, nucleotidase that shows phosphatase activity on nucleoside 5'-monophosphates. The polypeptide is 5'-nucleotidase SurE (Leptospira biflexa serovar Patoc (strain Patoc 1 / Ames)).